A 250-amino-acid chain; its full sequence is 3-deoxy-manno-octulosonate cytidylyltransferase (250 aa).

It belongs to the KdsB family.

Its subcellular location is the cytoplasm. It catalyses the reaction 3-deoxy-alpha-D-manno-oct-2-ulosonate + CTP = CMP-3-deoxy-beta-D-manno-octulosonate + diphosphate. It functions in the pathway nucleotide-sugar biosynthesis; CMP-3-deoxy-D-manno-octulosonate biosynthesis; CMP-3-deoxy-D-manno-octulosonate from 3-deoxy-D-manno-octulosonate and CTP: step 1/1. The protein operates within bacterial outer membrane biogenesis; lipopolysaccharide biosynthesis. In terms of biological role, activates KDO (a required 8-carbon sugar) for incorporation into bacterial lipopolysaccharide in Gram-negative bacteria. This chain is 3-deoxy-manno-octulosonate cytidylyltransferase, found in Legionella pneumophila (strain Corby).